The primary structure comprises 393 residues: METFLFTSESVNEGHPDKLCDQISDAVLDACLEQDPESKVACETCTKTNLVMVFGEITTKAIVDYEKIVRDTCRNIGFVSDDVGLDADNCKVLVYIEQQSPDIAQGVHGHLTKRPEEIGAGDQGHMFGYATDETPELMPLSHVLATKLGARLTEVRKNGTCPWLRPDGKTQVTVEYCNDNGAMIPIKVHTVLISTQHDETVTNDEIARDLKEHVIKPVIPEKYLDEKTIFHLNPSGRFVIGGPHGDAGLTGRKIIIDTYGGWGAHGGGAFSGKDPTKVDRSGAYIVRQAAKSIVASGLARRCIVQVSYAIGVPEPLSVFVDTYGTGKIPDKEILKIVKENFDFRPGMMSINLDLKRGGNGRFLKTAAYGHFGRDDPDFTWEVVKPLKWEKPQD.

Glu9 provides a ligand contact to Mg(2+). His15 is a binding site for ATP. Glu43 contacts K(+). Residues Glu56 and Gln99 each coordinate L-methionine. ATP contacts are provided by residues Asp167–Lys169, Ser235–Phe238, Asp246, Arg252–Lys253, Ala269, Lys273, and Lys277. Asp246 is a binding site for L-methionine. Lys277 is a binding site for L-methionine.

It belongs to the AdoMet synthase family. Homotetramer. Requires Mn(2+) as cofactor. The cofactor is Mg(2+). Co(2+) is required as a cofactor. K(+) serves as cofactor.

The protein localises to the cytoplasm. It catalyses the reaction L-methionine + ATP + H2O = S-adenosyl-L-methionine + phosphate + diphosphate. Its pathway is amino-acid biosynthesis; S-adenosyl-L-methionine biosynthesis; S-adenosyl-L-methionine from L-methionine: step 1/1. Its function is as follows. Catalyzes the formation of S-adenosylmethionine from methionine and ATP. The reaction comprises two steps that are both catalyzed by the same enzyme: formation of S-adenosylmethionine (AdoMet) and triphosphate, and subsequent hydrolysis of the triphosphate. The chain is S-adenosylmethionine synthase 1 (METK1) from Solanum tuberosum (Potato).